A 260-amino-acid chain; its full sequence is Imidazole glycerol phosphate synthase subunit HisF (260 aa).

Residues Asp-11 and Asp-130 contribute to the active site.

Belongs to the HisA/HisF family. Heterodimer of HisH and HisF.

Its subcellular location is the cytoplasm. It catalyses the reaction 5-[(5-phospho-1-deoxy-D-ribulos-1-ylimino)methylamino]-1-(5-phospho-beta-D-ribosyl)imidazole-4-carboxamide + L-glutamine = D-erythro-1-(imidazol-4-yl)glycerol 3-phosphate + 5-amino-1-(5-phospho-beta-D-ribosyl)imidazole-4-carboxamide + L-glutamate + H(+). The protein operates within amino-acid biosynthesis; L-histidine biosynthesis; L-histidine from 5-phospho-alpha-D-ribose 1-diphosphate: step 5/9. In terms of biological role, IGPS catalyzes the conversion of PRFAR and glutamine to IGP, AICAR and glutamate. The HisF subunit catalyzes the cyclization activity that produces IGP and AICAR from PRFAR using the ammonia provided by the HisH subunit. This Thermomicrobium roseum (strain ATCC 27502 / DSM 5159 / P-2) protein is Imidazole glycerol phosphate synthase subunit HisF.